Here is a 448-residue protein sequence, read N- to C-terminus: Divalent metal cation transporter MntH (448 aa).

The span at 1–10 (MKKDKTERTK) shows a compositional bias: basic and acidic residues. The tract at residues 1–20 (MKKDKTERTKQSWRKAQNAP) is disordered. A run of 11 helical transmembrane segments spans residues 41–61 (LFAFMGPGALIAVGYVDPGNW), 69–89 (SEFGYTLLSVILISNILAVLL), 117–137 (GFVLWILAELAIIATDIAEVI), 147–167 (FGIPLIWGVCITALDIFLVLF), 176–196 (IEVIVITLMVTILVCFGAEMV), 215–235 (IVTNPAMLYIALGILGATVMP), 270–290 (FSLTIALLINASILILAAAAF), 307–327 (LLNPTLGSSIASTVFAVALLA), 363–383 (VLAIVPAVIITALYGANGINE), 384–404 (LLIFSQVILSMQLSFAVIPLV), and 424–444 (IISWAVAIFIAVLNIYLLFYT).

Belongs to the NRAMP family.

It localises to the cell membrane. H(+)-stimulated, divalent metal cation uptake system. The chain is Divalent metal cation transporter MntH from Listeria monocytogenes serotype 4b (strain CLIP80459).